We begin with the raw amino-acid sequence, 544 residues long: Zinc finger and BTB domain-containing protein 7B (544 aa).

Positions 34–115 (CDLTIRTQGL…AYTATLTTSS (82 aa)) constitute a BTB domain. Ser150 carries the post-translational modification Phosphoserine. 2 disordered regions span residues 171 to 221 (TTAS…ARAN) and 244 to 314 (GRLG…EDPI). The segment covering 186–200 (PQVPLLPPPPPPPRP) has biased composition (pro residues). Residues 201 to 210 (VARRSRKPRK) show a composition bias toward basic residues. An N6-acetyllysine; by EP300; alternate mark is found at Lys210 and Lys216. Glycyl lysine isopeptide (Lys-Gly) (interchain with G-Cter in ubiquitin); alternate cross-links involve residues Lys210 and Lys216. The span at 277–286 (FEGEEEEEEM) shows a compositional bias: acidic residues. Residue Lys339 is modified to N6-acetyllysine; by EP300; alternate. Residue Lys339 forms a Glycyl lysine isopeptide (Lys-Gly) (interchain with G-Cter in ubiquitin); alternate linkage. A required for interaction with and acetylation by EP300 region spans residues 348–404 (MPQECPVCHKIIHGAGKLPRHMRTHTGEKPFACEVCGVRFTRNDKLKIHMRKHTGER). The C2H2-type 1 zinc finger occupies 350–372 (QECPVCHKIIHGAGKLPRHMRTH). Thr373 bears the Phosphothreonine mark. C2H2-type zinc fingers lie at residues 378–400 (FACEVCGVRFTRNDKLKIHMRKH) and 406–428 (YSCPHCPARFLHSYDLKNHMHLH). The C2H2-type 4; atypical zinc finger occupies 434–458 (YECHLCHKAFAKEDHLQRHLKGQNC). Disordered stretches follow at residues 465–493 (RRRKDDVAAPHYPPPSTTTSSPAGLDLSN) and 507–544 (WEQSATTGPPVTTQGPPEEEEEEGTPTTPQAEGAMESS). 2 stretches are compositionally biased toward low complexity: residues 511-522 (ATTGPPVTTQGP) and 531-544 (TPTTPQAEGAMESS).

As to quaternary structure, homodimerizes. Interacts with NCL, NEDD4 and YBX1. Interacts with HNRNPU (via RNA-binding RGG-box region); the interaction facilitates the recruitment of long non-coding RNA Blnc1 by ZBTB7B. Interacts with HDAC4 and HDAC5; the interaction allows the recruitment of HDAC4 and HDAC5 on CD8 loci for deacetylation and possible inhibition of CD8 genes expression. In terms of processing, acetylated directly and specifically by EP300. EP300-mediated acetylation of Lys-210, Lys-216 and Lys-339 stabilizes the protein by antagonizing ubiquitin conjugation. Post-translationally, ubiquitinated, leading to proteasomal degradation. Competes with acetylation on Lys-210, Lys-216 and Lys-339. Widely expressed, with a higher level in skin. Expressed in thymus. Restricted to CD4 cells (mature single positive CD4(+) and intermediate CD4(+)CD8(+) cells). Expressed in the luminal epithelial cells in the mammary glands where is up-regulated at late pregnancy and lactation. Expression is enriched in brown fat.

Its subcellular location is the nucleus. Functionally, transcription regulator that acts as a key regulator of lineage commitment of immature T-cell precursors. Exerts distinct biological functions in the mammary epithelial cells and T cells in a tissue-specific manner. Necessary and sufficient for commitment of CD4 lineage, while its absence causes CD8 commitment. Development of immature T-cell precursors (thymocytes) to either the CD4 helper or CD8 killer T-cell lineages correlates precisely with their T-cell receptor specificity for major histocompatibility complex class II or class I molecules, respectively. Cross-antagonism between ZBTB7B and CBF complexes are determinative to CD4 versus CD8 cell fate decision. Suppresses RUNX3 expression and imposes CD4+ lineage fate by inducing the SOCS suppressors of cytokine signaling. induces, as a transcriptional activator, SOCS genes expression which represses RUNX3 expression and promotes the CD4+ lineage fate. During CD4 lineage commitment, associates with multiple sites at the CD8 locus, acting as a negative regulator of the CD8 promoter and enhancers by epigenetic silencing through the recruitment of class II histone deacetylases, such as HDAC4 and HDAC5, to these loci. Regulates the development of IL17-producing CD1d-restricted naural killer (NK) T cells. Also functions as an important metabolic regulator in the lactating mammary glands. Critical feed-forward regulator of insulin signaling in mammary gland lactation, directly regulates expression of insulin receptor substrate-1 (IRS-1) and insulin-induced Akt-mTOR-SREBP signaling. Transcriptional repressor of the collagen COL1A1 and COL1A2 genes. May also function as a repressor of fibronectin and possibly other extracellular matrix genes. Potent driver of brown fat development, thermogenesis and cold-induced beige fat formation. Recruits the brown fat lncRNA 1 (Blnc1):HNRNPU ribonucleoprotein complex to activate thermogenic gene expression in brown and beige adipocytes. This Mus musculus (Mouse) protein is Zinc finger and BTB domain-containing protein 7B.